Here is a 66-residue protein sequence, read N- to C-terminus: Large ribosomal subunit protein bL35 (66 aa).

Residues 1–26 (MPKMKTHRGAAKRVKRTGSGKLKRSR) are compositionally biased toward basic residues. The interval 1–49 (MPKMKTHRGAAKRVKRTGSGKLKRSRAFTSHLFANKSTKQKRKLRKASL) is disordered.

It belongs to the bacterial ribosomal protein bL35 family.

This Staphylococcus saprophyticus subsp. saprophyticus (strain ATCC 15305 / DSM 20229 / NCIMB 8711 / NCTC 7292 / S-41) protein is Large ribosomal subunit protein bL35.